A 1201-amino-acid chain; its full sequence is Vitamin B12-dependent ribonucleotide reductase (1201 aa).

Substrate contacts are provided by residues S153, 198–199 (AC), G230, 482–486 (NPCSE), and 683–687 (PTGTI). A disulfide bond links C199 and C495. N482 functions as the Proton acceptor in the catalytic mechanism. Catalysis depends on C484, which acts as the Cysteine radical intermediate. The active-site Proton acceptor is the E486. The segment covering 1100–1118 (DEIGSKRATAESNGQEKET) has biased composition (basic and acidic residues). Residues 1100 to 1120 (DEIGSKRATAESNGQEKETLS) form a disordered region.

This sequence belongs to the ribonucleoside diphosphate reductase class-2 family. Requires adenosylcob(III)alamin as cofactor.

The catalysed reaction is a 2'-deoxyribonucleoside 5'-diphosphate + [thioredoxin]-disulfide + H2O = a ribonucleoside 5'-diphosphate + [thioredoxin]-dithiol. Catalyzes the reduction of ribonucleotides to deoxyribonucleotides. May function to provide a pool of deoxyribonucleotide precursors for DNA repair during oxygen limitation and/or for immediate growth after restoration of oxygen. This is Vitamin B12-dependent ribonucleotide reductase (nrdJ) from Leptospira interrogans serogroup Icterohaemorrhagiae serovar Lai (strain 56601).